A 256-amino-acid polypeptide reads, in one-letter code: Ubiquinone/menaquinone biosynthesis C-methyltransferase UbiE (256 aa).

S-adenosyl-L-methionine-binding positions include Thr79, Asp100, and 128–129 (DA).

The protein belongs to the class I-like SAM-binding methyltransferase superfamily. MenG/UbiE family.

The catalysed reaction is a 2-demethylmenaquinol + S-adenosyl-L-methionine = a menaquinol + S-adenosyl-L-homocysteine + H(+). The enzyme catalyses a 2-methoxy-6-(all-trans-polyprenyl)benzene-1,4-diol + S-adenosyl-L-methionine = a 5-methoxy-2-methyl-3-(all-trans-polyprenyl)benzene-1,4-diol + S-adenosyl-L-homocysteine + H(+). The protein operates within quinol/quinone metabolism; menaquinone biosynthesis; menaquinol from 1,4-dihydroxy-2-naphthoate: step 2/2. It participates in cofactor biosynthesis; ubiquinone biosynthesis. Its function is as follows. Methyltransferase required for the conversion of demethylmenaquinol (DMKH2) to menaquinol (MKH2) and the conversion of 2-polyprenyl-6-methoxy-1,4-benzoquinol (DDMQH2) to 2-polyprenyl-3-methyl-6-methoxy-1,4-benzoquinol (DMQH2). This chain is Ubiquinone/menaquinone biosynthesis C-methyltransferase UbiE, found in Pseudomonas aeruginosa (strain LESB58).